Reading from the N-terminus, the 84-residue chain is Large ribosomal subunit protein bL31 (84 aa).

Zn(2+) is bound by residues Cys16, Cys18, Cys38, and Cys41.

The protein belongs to the bacterial ribosomal protein bL31 family. Type A subfamily. As to quaternary structure, part of the 50S ribosomal subunit. Requires Zn(2+) as cofactor.

Functionally, binds the 23S rRNA. The chain is Large ribosomal subunit protein bL31 from Mycobacterium leprae (strain Br4923).